We begin with the raw amino-acid sequence, 872 residues long: Homeobox-leucine zipper protein ROC6 (872 aa).

2 disordered regions span residues 28-53 and 67-130; these read VHNS…GLSL and NRSL…HRHT. The segment covering 74 to 85 has biased composition (gly residues); it reads GNGGSGSGGDGD. The span at 86–99 shows a compositional bias: basic and acidic residues; that stretch reads SLGRGREEENDSRS. The segment covering 119 to 130 has biased composition (basic residues); the sequence is PRKKKKRYHRHT. The segment at residues 122-181 is a DNA-binding region (homeobox); it reads KKKRYHRHTPQQIQELEAVFKECPHPDEKQRMELSRRLNLESRQVKFWFQNRRTQMKQTQ. Residues 176–248 are a coiled coil; sequence QMKQTQIERH…LKDELDRVCA (73 aa). Residues 340–583 form the START domain; the sequence is GAIDRAVLLE…LQRQCQYLAI (244 aa). A disordered region spans residues 792–818; the sequence is HNNGASPSPAEVGSGASPNSAAGGGGG.

Belongs to the HD-ZIP homeobox family. Class IV subfamily.

The protein resides in the nucleus. Probable transcription factor. This is Homeobox-leucine zipper protein ROC6 (ROC6) from Oryza sativa subsp. japonica (Rice).